The primary structure comprises 427 residues: Enolase (427 aa).

Q163 lines the (2R)-2-phosphoglycerate pocket. Residue E205 is the Proton donor of the active site. Mg(2+)-binding residues include D242, E285, and D312. (2R)-2-phosphoglycerate-binding residues include K337, R366, S367, and K388. The active-site Proton acceptor is K337.

It belongs to the enolase family. It depends on Mg(2+) as a cofactor.

The protein resides in the cytoplasm. It localises to the secreted. The protein localises to the cell surface. The enzyme catalyses (2R)-2-phosphoglycerate = phosphoenolpyruvate + H2O. It functions in the pathway carbohydrate degradation; glycolysis; pyruvate from D-glyceraldehyde 3-phosphate: step 4/5. In terms of biological role, catalyzes the reversible conversion of 2-phosphoglycerate (2-PG) into phosphoenolpyruvate (PEP). It is essential for the degradation of carbohydrates via glycolysis. The protein is Enolase of Polaromonas sp. (strain JS666 / ATCC BAA-500).